The following is a 415-amino-acid chain: MKLKSLLLRYYPPGIMLEYEKGGELKTKSIDLLELSPSTDVNTLVGEIQQAEPLITASRTKQVRLLVQRLQEKLRQHSDHNFYLFKVLRAHILPLTNVALNKAGSCFITGSYDRTCKVWDTASGEELHTLEGHKNVVYAIAFNNPYGDKIATGSFDKTCKLWSAETGKCYHTFRGHTAEIVCLSFNPQSTVVATGSMDTTAKLWDIQNGEEVVTLTGHLAEIISLSFDTSGDRIITGSFDHTVVVWDASTGRKVHTLIGHCAEISSALFNWDCSLILTGSMDKTCMLWDATSGKYVATLTGHDDEILDSCFDYTGKLIATASADGTARVYNATTRKCVTKLEGHEGEISKISFNPQGNRLLTGSSDKTARIWDVQTGQCLQVLEGHTDEIFSCAFNYKGNIVITGSKDNSCRIWR.

WD repeat units lie at residues 90 to 129, 132 to 174, 175 to 214, 217 to 256, 259 to 298, 301 to 340, 343 to 384, and 386 to 415; these read AHIL…ELHT, GHKN…HTFR, GHTA…EVVT, GHLA…KVHT, GHCA…YVAT, GHDD…CVTK, GHEG…QVLE, and HTDE…RIWR.

It belongs to the WD repeat WDR69 family. Interacts with IFT46. As to expression, in early mouse embryos, expression is limited to distal, motile ciliated cells of the node.

It is found in the cytoplasm. The protein resides in the cytoskeleton. It localises to the flagellum basal body. The protein localises to the flagellum axoneme. Functionally, required for axonemal dynein assembly and ciliary motility in ciliated organs, including Kupffer's vesicle, during embryogenesis. Facilitates the onset of robust cilia motility during development. In Mus musculus (Mouse), this protein is Dynein assembly factor with WD repeat domains 1.